A 549-amino-acid polypeptide reads, in one-letter code: MSEVKQCDVVVIGAGHNGLTTGAYLARAGAKVLVVERRHETGGALVTEEFSGFRFNLHATYMMMLDVAPPYKDLGLEADGCVYIRPDVAASILKKDGTAVTLHGDLEKSVESIRRISPRDAERFREIYLEYKQMSDEYLIPATYGKPVGSAQLAGTYMETELGKKILEVSELTPYQICQSWGFETPELGALLLYLICMWGIDPTETNSSYLVPLYFNRMLNATLVRGGSHRLSSTLQKAGILAGMEVMENHEVKRIIMEDGAAVGVEVAPTGTDGPLIRIDAKSIVTSTDPTTTFGTFISEEEMQQRSKLCLNTARNWEWEHSSLFLCHLGLRKKPRFKAEDQDPAVQTAFIRVFGVESPEDVVKHFNEVMEGHLLHDIGHVTFTTDLDPNQAPQETEPGSAVARIEAVVPYAPAQGDWADVAGPYGDRLIAKLAEYMVDFDPADIIRRYQYTPVYIEMKIPQMKRGSFKHGAYVMTQMGYSRPNVQCSSNKTPIKGLYVCGASTFPGGMITFGGGYNAAKTVAQDMGLNIWWTEPDEVIAAREKGLLL.

This sequence belongs to the carotenoid/retinoid oxidoreductase family. In terms of assembly, heterodimer composed of CtmA and CtmB. It depends on FAD as a cofactor.

It is found in the cytoplasm. The enzyme catalyses (4S)-limonene + A + H2O = (4S)-perillyl alcohol + AH2. The catalysed reaction is (4R)-limonene + A + H2O = (4R)-perillyl alcohol + AH2. Its pathway is terpene metabolism; monoterpene degradation. With respect to regulation, the presence of molecular oxygen causes a 40% reduction in specific activity. Involved in the degradation of the cyclic monoterpene limonene. Catalyzes the oxidation of limonene at the primary methyl group, forming perillyl alcohol. Hydroxylates the R- and S-enantiomers to their respective enantiomeric form of perillyl alcohol at a similar rate. Native CtmAB oxidizes a wide range of monocyclic monoterpenes containing the allylic methyl group motif (1-methyl-cyclohex-1-ene). Can also catalyze the reverse reaction, the reduction of perillyl alcohol to limonene, but with lower efficiency. Cannot use molecular oxygen as an electron acceptor. The natural electron acceptor is likely a heterodimeric electron transfer flavoprotein (ETF). The protein is Limonene dehydrogenase subunit B of Castellaniella defragrans (strain DSM 12143 / CCUG 39792 / 65Phen) (Alcaligenes defragrans).